A 538-amino-acid polypeptide reads, in one-letter code: Retinoblastoma-binding protein 5 (538 aa).

WD repeat units lie at residues 22–63 (DCIS…KIIS) and 64–103 (AHIH…CDQR). Residue Lys-129 forms a Glycyl lysine isopeptide (Lys-Gly) (interchain with G-Cter in SUMO2) linkage. WD repeat units follow at residues 148-188 (DDDS…LVAS), 196-235 (SNTT…TCGR), 249-291 (VNRT…KILH), and 293-331 (TRGE…NWSA). Position 252 is a phosphothreonine; by CDK1 (Thr-252). The interaction with ASH2L stretch occupies residues 330 to 366 (SAFAPDFKELDENVEYEERESEFDIEDEDKSEPEQTG). A compositionally biased stretch (acidic residues) spans 344–360 (EYEERESEFDIEDEDKS). Positions 344–377 (EYEERESEFDIEDEDKSEPEQTGADAAEDEEVDV) are disordered. At Ser-350 the chain carries Phosphoserine. The interaction with WDR5 stretch occupies residues 371-380 (EDEEVDVTSV). Residues Ser-388 and Ser-389 each carry the phosphoserine modification. The segment at 408–538 (VEDPEENPYG…TAGGAISELL (131 aa)) is disordered. Residues 479-490 (SKKKQAGRPKGS) show a composition bias toward basic residues. Over residues 491-510 (KGKEKDSPFKPKLYKGDRGL) the composition is skewed to basic and acidic residues. At Ser-497 the chain carries Phosphoserine; by CDK1. Position 525 is a phosphoserine (Ser-525).

In terms of assembly, component of the SET1 complex, at least composed of the catalytic subunit (SETD1A or SETD1B), WDR5, WDR82, RBBP5, ASH2L/ASH2, CXXC1/CFP1, HCFC1 and DPY30. Core component of several methyltransferase-containing complexes including MLL1/MLL, MLL2/3 (also named ASCOM complex) and MLL4/WBP7. Each complex is at least composed of ASH2L, RBBP5, WDR5, DPY30, one or more specific histone methyltransferases (KMT2A/MLL1, KMT2D/MLL2, KMT2C/MLL3 and KMT2B/MLL4), and the facultative components PAGR1, BACC1, CHD8, E2F6, HCFC1, HCFC2, HSP70, INO80C, KDM6A, KANSL1, LAS1L, MAX, MCRS1, MEN1, MGA, MYST1/MOF, NCOA6, PAXIP1/PTIP, PELP1, PHF20, PRP31, RING2, RUVB1/TIP49A, RUVB2/TIP49B, SENP3, TAF1, TAF4, TAF6, TAF7, TAF9, TEX10 and alpha- and beta-tubulin. Component of a histone methylation complex composed of at least ZNF335, RBBP5, ASH2L and WDR5; the complex may have histone H3-specific methyltransferase activity, however does not have specificity for 'Lys-4' of histone H3. Interacts with ZNF335. Interacts with ASH2L; the interaction is direct. Interacts with WDR5; the interaction is direct. Components of the ZNF335-RBBP5-ASH2L-WDR5 histone methylation complex may associate with components of a nuclear receptor-mediated transcription complex to form a complex at least composed of ZNF335, HCFC1, CCAR2, EMSY, MKI67, RBBP5, ASH2L and WDR5. Within this complex interacts with EMSY. Found in a complex with RBBP5, ASH2L, DPY30, KMT2A, KMT2D and WDR5. Interacts with SETD1A. Interacts with WDR82. As to expression, ubiquitously expressed.

Its subcellular location is the nucleus. In terms of biological role, in embryonic stem (ES) cells, plays a crucial role in the differentiation potential, particularly along the neural lineage, regulating gene induction and H3 'Lys-4' methylation at key developmental loci, including that mediated by retinoic acid. Does not affect ES cell self-renewal. Component or associated component of some histone methyltransferase complexes which regulates transcription through recruitment of those complexes to gene promoters. As part of the MLL1/MLL complex, involved in mono-, di- and trimethylation at 'Lys-4' of histone H3. Histone H3 'Lys-4' methylation represents a specific tag for epigenetic transcriptional activation. In association with ASH2L and WDR5, stimulates the histone methyltransferase activities of KMT2A, KMT2B, KMT2C, KMT2D, SETD1A and SETD1B. The chain is Retinoblastoma-binding protein 5 (RBBP5) from Homo sapiens (Human).